A 396-amino-acid polypeptide reads, in one-letter code: S-adenosylmethionine synthase (396 aa).

Residue H14 coordinates ATP. D16 lines the Mg(2+) pocket. E42 serves as a coordination point for K(+). E55 and Q98 together coordinate L-methionine. The flexible loop stretch occupies residues 98-108; sequence QSPDIALGVNE. ATP is bound by residues 174-176, 241-242, D250, 256-257, A273, and K277; these read DGK, RF, and RK. Residue D250 participates in L-methionine binding. K281 provides a ligand contact to L-methionine.

Belongs to the AdoMet synthase family. Homotetramer; dimer of dimers. Mg(2+) is required as a cofactor. Requires K(+) as cofactor.

It localises to the cytoplasm. The enzyme catalyses L-methionine + ATP + H2O = S-adenosyl-L-methionine + phosphate + diphosphate. It participates in amino-acid biosynthesis; S-adenosyl-L-methionine biosynthesis; S-adenosyl-L-methionine from L-methionine: step 1/1. Catalyzes the formation of S-adenosylmethionine (AdoMet) from methionine and ATP. The overall synthetic reaction is composed of two sequential steps, AdoMet formation and the subsequent tripolyphosphate hydrolysis which occurs prior to release of AdoMet from the enzyme. In Fervidobacterium nodosum (strain ATCC 35602 / DSM 5306 / Rt17-B1), this protein is S-adenosylmethionine synthase.